Reading from the N-terminus, the 262-residue chain is Abhydrolase domain-containing protein ACTT2-1 (262 aa).

Residues 260–262 carry the Peroxisomal targeting signal type 1 motif; sequence SKL.

Belongs to the AB hydrolase superfamily. AKT2 hydrolase family.

The protein localises to the peroxisome. The protein operates within mycotoxin biosynthesis. Its function is as follows. Abhydrolase domain-containing protein; part of the gene clusters that mediate the biosynthesis of the host-selective toxins (HSTs) ACT-toxins responsible for brown spot of tangerine disease by the tangerine pathotype which affects tangerines and mandarins. ACT-toxins consist of three moieties, 9,10-epoxy-8-hydroxy-9-methyl-decatrienoic acid (EDA), valine and a polyketide. ACT-toxin I is toxic to both citrus and pear; toxin II the 5''-deoxy derivative of ACT-toxin I, is highly toxic to pear and slightly toxic to citrus. On cellular level, ACT-toxins affect plasma membrane of susceptible cells and cause a sudden increase in loss of K(+) after a few minutes of toxin treatment. The acyl-CoA ligase ACTT1, the hydrolase ACTT2, the enoyl-CoA hydratases ACTT3 and ACTT6, and the acyl-CoA synthetase ACTT5 are all involved in the biosynthesis of the AK-, AF- and ACT-toxin common 9,10-epoxy-8-hydroxy-9-methyl-decatrienoic acid (EDA) structural moiety. The exact role of each enzyme, and of additional enzymes identified within the AF-toxin clusters have still to be determined. On the other hand, ACTTS1 to ACTTS4 are specific to the tangerine pathotype. The function of ACTTS3 is to elongate the polyketide chain portion of ACT-toxin that is unique to this toxin. The enoyl-reductase ACTTS2 might complement the missing enoyl-reductase (ER) domain in ACTTS3 in the synthesis of the polyketide portion of ACT-toxin. The roles of the nonribosomal peptide synthetases-related proteins ACTTS1 and ACTTS4 have also still not been elucidated. This is Abhydrolase domain-containing protein ACTT2-1 from Alternaria alternata (Alternaria rot fungus).